The primary structure comprises 338 residues: Phosphate acyltransferase (338 aa).

The protein belongs to the PlsX family. In terms of assembly, homodimer. Probably interacts with PlsY.

It localises to the cytoplasm. The catalysed reaction is a fatty acyl-[ACP] + phosphate = an acyl phosphate + holo-[ACP]. The protein operates within lipid metabolism; phospholipid metabolism. In terms of biological role, catalyzes the reversible formation of acyl-phosphate (acyl-PO(4)) from acyl-[acyl-carrier-protein] (acyl-ACP). This enzyme utilizes acyl-ACP as fatty acyl donor, but not acyl-CoA. This is Phosphate acyltransferase from Mannheimia succiniciproducens (strain KCTC 0769BP / MBEL55E).